Here is a 425-residue protein sequence, read N- to C-terminus: 3-phosphoshikimate 1-carboxyvinyltransferase (425 aa).

3-phosphoshikimate contacts are provided by lysine 23, serine 24, and arginine 28. Lysine 23 is a binding site for phosphoenolpyruvate. Glycine 96 and arginine 124 together coordinate phosphoenolpyruvate. Residues threonine 170, serine 171, glutamine 172, serine 198, aspartate 314, and lysine 341 each contribute to the 3-phosphoshikimate site. Residue glutamine 172 participates in phosphoenolpyruvate binding. Aspartate 314 functions as the Proton acceptor in the catalytic mechanism. Residues arginine 345, arginine 386, and lysine 411 each contribute to the phosphoenolpyruvate site.

The protein belongs to the EPSP synthase family. As to quaternary structure, monomer.

The protein resides in the cytoplasm. It carries out the reaction 3-phosphoshikimate + phosphoenolpyruvate = 5-O-(1-carboxyvinyl)-3-phosphoshikimate + phosphate. It participates in metabolic intermediate biosynthesis; chorismate biosynthesis; chorismate from D-erythrose 4-phosphate and phosphoenolpyruvate: step 6/7. Catalyzes the transfer of the enolpyruvyl moiety of phosphoenolpyruvate (PEP) to the 5-hydroxyl of shikimate-3-phosphate (S3P) to produce enolpyruvyl shikimate-3-phosphate and inorganic phosphate. In Nostoc sp. (strain PCC 7120 / SAG 25.82 / UTEX 2576), this protein is 3-phosphoshikimate 1-carboxyvinyltransferase.